The chain runs to 86 residues: Large ribosomal subunit protein bL31B (86 aa).

Belongs to the bacterial ribosomal protein bL31 family. Type B subfamily. In terms of assembly, part of the 50S ribosomal subunit.

The polypeptide is Large ribosomal subunit protein bL31B (Streptococcus agalactiae serotype Ia (strain ATCC 27591 / A909 / CDC SS700)).